Reading from the N-terminus, the 346-residue chain is Protein phosphatase 1 regulatory subunit 7 (346 aa).

Acidic residues predominate over residues Met-1 to Met-13. The tract at residues Met-1–Leu-46 is disordered. The span at Glu-14–Gly-37 shows a compositional bias: basic and acidic residues. LRR repeat units follow at residues Glu-63–Lys-84, Lys-85–Val-106, Thr-107–Arg-128, Asp-129–Ser-150, His-151–Thr-172, Gln-173–Arg-194, Glu-195–Thr-216, Asn-217–Val-238, Asn-239–Asn-260, Lys-261–Ser-282, and Glu-283–Ser-304. One can recognise an LRRCT domain in the interval Asn-317–Phe-346.

The protein belongs to the SDS22 family.

Its subcellular location is the nucleus. Its function is as follows. Regulatory subunit of protein phosphatase 1. The protein is Protein phosphatase 1 regulatory subunit 7 (ppp1r7) of Xenopus tropicalis (Western clawed frog).